A 566-amino-acid polypeptide reads, in one-letter code: Hemocyanin B chain (566 aa).

Cysteine 82 and cysteine 87 form a disulfide bridge. The Cu cation site is built by histidine 183, histidine 187, histidine 213, histidine 309, histidine 313, and histidine 347.

The protein belongs to the tyrosinase family. Hemocyanin subfamily. Hemolymph.

Its subcellular location is the secreted. It localises to the extracellular space. Its function is as follows. Hemocyanins are copper-containing oxygen carriers occurring freely dissolved in the hemolymph of many mollusks and arthropods. The polypeptide is Hemocyanin B chain (Astacus leptodactylus (Turkish narrow-clawed crayfish)).